The chain runs to 318 residues: NADH-ubiquinone oxidoreductase chain 1 (318 aa).

Transmembrane regions (helical) follow at residues 2-22 (FMIN…FLTL), 70-90 (MFII…IPLP), 100-120 (LGIL…LWSG), 147-167 (AIIL…TLII), 171-191 (YLWL…STLA), 217-237 (AGPF…MNIF), 253-273 (ELYS…FLWI), and 294-314 (LPLT…LSSI).

This sequence belongs to the complex I subunit 1 family. Core subunit of respiratory chain NADH dehydrogenase (Complex I) which is composed of 45 different subunits.

Its subcellular location is the mitochondrion inner membrane. The catalysed reaction is a ubiquinone + NADH + 5 H(+)(in) = a ubiquinol + NAD(+) + 4 H(+)(out). Its function is as follows. Core subunit of the mitochondrial membrane respiratory chain NADH dehydrogenase (Complex I) which catalyzes electron transfer from NADH through the respiratory chain, using ubiquinone as an electron acceptor. Essential for the catalytic activity and assembly of complex I. This Equus caballus (Horse) protein is NADH-ubiquinone oxidoreductase chain 1 (MT-ND1).